Reading from the N-terminus, the 531-residue chain is tRNA(Ile)-lysidine synthase (531 aa).

Serine 32–serine 37 is an ATP binding site.

The protein belongs to the tRNA(Ile)-lysidine synthase family.

It is found in the cytoplasm. It catalyses the reaction cytidine(34) in tRNA(Ile2) + L-lysine + ATP = lysidine(34) in tRNA(Ile2) + AMP + diphosphate + H(+). In terms of biological role, ligates lysine onto the cytidine present at position 34 of the AUA codon-specific tRNA(Ile) that contains the anticodon CAU, in an ATP-dependent manner. Cytidine is converted to lysidine, thus changing the amino acid specificity of the tRNA from methionine to isoleucine. The polypeptide is tRNA(Ile)-lysidine synthase (Blochmanniella floridana).